A 616-amino-acid polypeptide reads, in one-letter code: MPASFADTTFTDPSRIRNFCIIAHIDHGKSTLADRMLQLTGVVEERAMRAQYLDRMDIERERGITIKAQNVRLPWRVDDTDYVMHLIDTPGHVDFTYEVSRALEACEGAILLVDAAQGIEAQTLANLYLALDKDLTIIPVLNKIDLPAADPDRYAAELAHIVGCEPSDVLRVSGKTGVGVPELLDEVIRQVPPPVGDADAPARAMIFDSVYDTYRGVVTYVRVVDGKLTPREKIKMMSTGATHELLEIGIVSPEPKPTDGLGVGEVGYLITGVKDVRQSKVGDTVTAARNGAAEPLTGYREPRPMVYSGLYPVDGSDYPDLRDALEKLQLNDAALSYTPETSVALGFGFRCGFLGLLHMEITRERLQREFDLDLISTAPNVVYRVEMEDGTEHVVTNPSYWPEGKVRKVFEPVVKCTIISPSEFIGSIMELCQSRRGELGGMDYLSETRVELRYTLPMAEIIFDFFDSLKSRTRGYASLDYEESGEQESQLVKVDILLQGEAVDAFSAIVHKDAAQAYGHKMTTKLRELIPRQQFEVPIQAAIGSKIIARENIRAIRKDVLAKCYGGDISRKRKLLEKQKEGKKRMKTIGRVDVPQEAFVAALSSDAQADKPKDKK.

The tr-type G domain occupies 14–195 (SRIRNFCIIA…EVIRQVPPPV (182 aa)). GTP-binding positions include 26–31 (DHGKST) and 142–145 (NKID).

The protein belongs to the TRAFAC class translation factor GTPase superfamily. Classic translation factor GTPase family. LepA subfamily.

It is found in the cell membrane. The enzyme catalyses GTP + H2O = GDP + phosphate + H(+). Its function is as follows. Required for accurate and efficient protein synthesis under certain stress conditions. May act as a fidelity factor of the translation reaction, by catalyzing a one-codon backward translocation of tRNAs on improperly translocated ribosomes. Back-translocation proceeds from a post-translocation (POST) complex to a pre-translocation (PRE) complex, thus giving elongation factor G a second chance to translocate the tRNAs correctly. Binds to ribosomes in a GTP-dependent manner. The chain is Elongation factor 4 from Nocardia farcinica (strain IFM 10152).